The following is a 276-amino-acid chain: Small ribosomal subunit protein uS3 (276 aa).

Residues 39–110 (IRRETMKFLK…KINIKIKEIK (72 aa)) form the KH type-2 domain.

Belongs to the universal ribosomal protein uS3 family. As to quaternary structure, part of the 30S ribosomal subunit. Forms a tight complex with proteins S10 and S14.

Its function is as follows. Binds the lower part of the 30S subunit head. Binds mRNA in the 70S ribosome, positioning it for translation. The protein is Small ribosomal subunit protein uS3 of Borrelia turicatae (strain 91E135).